A 938-amino-acid polypeptide reads, in one-letter code: Glutamate receptor ionotropic, NMDA 1 (938 aa).

The signal sequence occupies residues Met-1 to Ala-18. The Extracellular segment spans residues Arg-19–Gln-559. Asn-61, Asn-203, Asn-239, Asn-276, Asn-300, Asn-350, Asn-368, Asn-440, Asn-471, and Asn-491 each carry an N-linked (GlcNAc...) asparagine glycan. A disulfide bridge links Cys-79 with Cys-308. 2 cysteine pairs are disulfide-bonded: Cys-420/Cys-454 and Cys-436/Cys-455. Glycine-binding residues include Pro-516, Thr-518, and Arg-523. A helical membrane pass occupies residues Ser-560 to Leu-580. At Asp-581–Thr-602 the chain is on the cytoplasmic side. The segment at residues Leu-603–Pro-624 is an intramembrane region (discontinuously helical). The tract at residues Leu-603 to Pro-624 is pore-forming. The Cytoplasmic segment spans residues Arg-625 to Arg-630. A helical membrane pass occupies residues Ile-631–Tyr-647. At Thr-648–Asn-812 the chain is on the extracellular side. The N-linked (GlcNAc...) asparagine glycan is linked to Asn-674. 2 residues coordinate glycine: Ser-688 and Asp-732. A disulfide bridge connects residues Cys-744 and Cys-798. N-linked (GlcNAc...) asparagine glycosylation is present at Asn-771. Residues Met-813 to Ile-833 form a helical membrane-spanning segment. The Cytoplasmic portion of the chain corresponds to Glu-834 to Ser-938. Phosphoserine; by PKC is present on Ser-889. Residues Ser-889 to Ser-938 form a disordered region. Position 890 is a phosphoserine (Ser-890). 2 positions are modified to phosphoserine; by PKC: Ser-896 and Ser-897. Residues Val-916 to Gly-927 show a composition bias toward basic and acidic residues.

This sequence belongs to the glutamate-gated ion channel (TC 1.A.10.1) family. NR1/GRIN1 subfamily. In terms of assembly, heterotetramer; the NMDAR subunits are modular and harbor tiered domains that function in concert to regulate opening and closing of the cation-selective ion channel pore. Forms heterotetrameric channels composed of two GluN1/zeta subunits (GRIN1), and two identical GluN2/epsilon subunits (GRIN2A, GRIN2B, GRIN2C or GRIN2D) or GluN3 subunits (GRIN3A or GRIN3B) (in vitro). Can also form heterotetrameric channels that contain at least two GluN1 subunits and at least two different GluN2 subunits (or a combination of one GluN2 and one GluN3 subunits) (in vitro). In vivo, the subunit composition may vary in function of the expression levels of the different subunits. Found in a complex with GRIN2A or GRIN2B, GRIN3A and PPP2CB. Found in a complex with GRIN2A or GRIN2B and GRIN3B. Interacts with SNX27 (via PDZ domain); the interaction is required for recycling to the plasma membrane when endocytosed and prevent degradation in lysosomes. Interacts with DLG4 and MPDZ. Interacts with LRFN1 and LRFN2. Interacts with MYZAP. Found in a complex with DLG4 and PRR7. Found in a complex with GRIN2B and PRR7. Interacts with PRR7; the interaction is reduced following NMDA receptor activity. NMDA is probably regulated by C-terminal phosphorylation of an isoform of GRIN1 by PKC. Dephosphorylated on Ser-897 probably by protein phosphatase 2A (PPP2CB). Its phosphorylated state is influenced by the formation of the NMDAR-PPP2CB complex and the NMDAR channel activity. Detected in brain (at protein level). Detected in brain.

The protein localises to the cell membrane. Its subcellular location is the postsynaptic cell membrane. It is found in the postsynaptic density membrane. It localises to the synaptic cell membrane. The catalysed reaction is Ca(2+)(in) = Ca(2+)(out). It carries out the reaction Na(+)(in) = Na(+)(out). It catalyses the reaction K(+)(in) = K(+)(out). Functionally, component of N-methyl-D-aspartate (NMDA) receptors (NMDARs) that function as heterotetrameric, ligand-gated cation channels with high calcium permeability and voltage-dependent block by Mg(2+). NMDARs participate in synaptic plasticity for learning and memory formation by contributing to the long-term potentiation (LTP). Channel activation requires binding of the neurotransmitter L-glutamate to the GluN2 subunit, glycine or D-serine binding to the GluN1 subunit, plus membrane depolarization to eliminate channel inhibition by Mg(2+). NMDARs mediate simultaneously the potasium efflux and the influx of calcium and sodium. Each GluN2 or GluN3 subunit confers differential attributes to channel properties, including activation, deactivation and desensitization kinetics, pH sensitivity, Ca2(+) permeability, and binding to allosteric modulators. This Mus musculus (Mouse) protein is Glutamate receptor ionotropic, NMDA 1.